Here is a 638-residue protein sequence, read N- to C-terminus: Neuroendocrine convertase 2 (638 aa).

The N-terminal stretch at 1–25 (MKGGCVSQWKAAAGLLFCVTVFASA) is a signal peptide. The propeptide occupies 26-109 (ERPVFTNHFL…QQEGFDRKKR (84 aa)). The region spanning 129 to 453 (QWYLINTGQA…YGVLDAGAMV (325 aa)) is the Peptidase S8 domain. Residues aspartate 167 and histidine 208 each act as charge relay system in the active site. Intrachain disulfides connect cysteine 225–cysteine 376 and cysteine 317–cysteine 347. Asparagine 375 carries an N-linked (GlcNAc...) asparagine glycan. Catalysis depends on serine 384, which acts as the Charge relay system. A P/Homo B domain is found at 461–597 (TVPERFHCVG…TLMLHGSQSA (137 aa)). A disulfide bond links cysteine 468 and cysteine 494. Asparagine 514 and asparagine 524 each carry an N-linked (GlcNAc...) asparagine glycan.

It belongs to the peptidase S8 family. Furin subfamily.

The protein resides in the cytoplasmic vesicle. Its subcellular location is the secretory vesicle. It is found in the secreted. The enzyme catalyses Release of protein hormones and neuropeptides from their precursors, generally by hydrolysis of -Lys-Arg-|- bonds.. Its function is as follows. Serine endopeptidase which is involved in the processing of hormone and other protein precursors at sites comprised of pairs of basic amino acid residues. Responsible for the release of glucagon from proglucagon in pancreatic A cells. This is Neuroendocrine convertase 2 (PCSK2) from Sus scrofa (Pig).